Consider the following 505-residue polypeptide: Probable cytosol aminopeptidase (505 aa).

Mn(2+)-binding residues include Lys269 and Asp274. Lys281 is a catalytic residue. Mn(2+)-binding residues include Asp292, Asp351, and Glu353. The active site involves Arg355.

It belongs to the peptidase M17 family. Requires Mn(2+) as cofactor.

Its subcellular location is the cytoplasm. The enzyme catalyses Release of an N-terminal amino acid, Xaa-|-Yaa-, in which Xaa is preferably Leu, but may be other amino acids including Pro although not Arg or Lys, and Yaa may be Pro. Amino acid amides and methyl esters are also readily hydrolyzed, but rates on arylamides are exceedingly low.. It catalyses the reaction Release of an N-terminal amino acid, preferentially leucine, but not glutamic or aspartic acids.. Its function is as follows. Presumably involved in the processing and regular turnover of intracellular proteins. Catalyzes the removal of unsubstituted N-terminal amino acids from various peptides. The chain is Probable cytosol aminopeptidase from Rhodococcus erythropolis (strain PR4 / NBRC 100887).